The primary structure comprises 507 residues: Cell cycle serine/threonine-protein kinase hsk1 (507 aa).

S22 bears the Phosphoserine mark. The 366-residue stretch at 68-433 (YRLIEKIGEG…AEEALDHDFL (366 aa)) folds into the Protein kinase domain. ATP-binding positions include 74 to 82 (IGEGTFSSV) and K129. D216 functions as the Proton acceptor in the catalytic mechanism. T291 carries the post-translational modification Phosphothreonine. Residues 475–507 (FKEQEETDEPTSLSKRKRSIDEILPNDALQDGA) are disordered. S493 carries the phosphoserine modification.

The protein belongs to the protein kinase superfamily. Ser/Thr protein kinase family. CDC7 subfamily. Heterodimer with the regulatory subunit him1/dfp1. May form homooligomeric complexes. Interacts with mcm10. Autophosphorylated. Phosphorylated by cds1 in vitro.

It localises to the nucleus. The enzyme catalyses L-seryl-[protein] + ATP = O-phospho-L-seryl-[protein] + ADP + H(+). It carries out the reaction L-threonyl-[protein] + ATP = O-phospho-L-threonyl-[protein] + ADP + H(+). Its activity is regulated as follows. Phosphorylation of exogenous substrates activated by Dfp1. Its function is as follows. Required for G1/S transition. Plays a role in DNA replication checkpoint signaling through regulating rad3 and cds1. Involved in the maintenance of mitotic chromosome structures during S phase through regulating the function of rad21. Required for initiation of mitotic DNA replication through phosphorylating mcm2/cdc19. Required for genome integrity. In Schizosaccharomyces pombe (strain 972 / ATCC 24843) (Fission yeast), this protein is Cell cycle serine/threonine-protein kinase hsk1 (hsk1).